Reading from the N-terminus, the 497-residue chain is Galactose-1-phosphate uridylyltransferase (497 aa).

The protein belongs to the galactose-1-phosphate uridylyltransferase type 2 family.

The protein resides in the cytoplasm. The catalysed reaction is alpha-D-galactose 1-phosphate + UDP-alpha-D-glucose = alpha-D-glucose 1-phosphate + UDP-alpha-D-galactose. Its pathway is carbohydrate metabolism; galactose metabolism. The chain is Galactose-1-phosphate uridylyltransferase from Clostridium acetobutylicum (strain ATCC 824 / DSM 792 / JCM 1419 / IAM 19013 / LMG 5710 / NBRC 13948 / NRRL B-527 / VKM B-1787 / 2291 / W).